The chain runs to 53 residues: Light-harvesting protein B-800/850 alpha chain (53 aa).

Residues methionine 1–valine 14 lie on the Cytoplasmic side of the membrane. Residues glycine 15–leucine 35 form a helical membrane-spanning segment. Histidine 31 contacts a bacteriochlorophyll. The Periplasmic segment spans residues serine 36–alanine 53.

Belongs to the antenna complex alpha subunit family. The core complex is formed by different alpha and beta chains, binding bacteriochlorophyll molecules, and arranged most probably in tetrameric structures disposed around the reaction center. The non-pigmented gamma chains may constitute additional components.

It is found in the cell inner membrane. Antenna complexes are light-harvesting systems, which transfer the excitation energy to the reaction centers. The sequence is that of Light-harvesting protein B-800/850 alpha chain from Rhodoblastus acidophilus (Rhodopseudomonas acidophila).